The chain runs to 660 residues: tRNA 5-methylaminomethyl-2-thiouridine biosynthesis bifunctional protein MnmC (660 aa).

Residues 1-242 (MTDRIVPATL…KRAMLVGEFA (242 aa)) are tRNA (mnm(5)s(2)U34)-methyltransferase. The tract at residues 266-660 (IGAGLAGCAV…VRALRHGRVA (395 aa)) is FAD-dependent cmnm(5)s(2)U34 oxidoreductase.

This sequence in the N-terminal section; belongs to the methyltransferase superfamily. tRNA (mnm(5)s(2)U34)-methyltransferase family. The protein in the C-terminal section; belongs to the DAO family. It depends on FAD as a cofactor.

The protein localises to the cytoplasm. It carries out the reaction 5-aminomethyl-2-thiouridine(34) in tRNA + S-adenosyl-L-methionine = 5-methylaminomethyl-2-thiouridine(34) in tRNA + S-adenosyl-L-homocysteine + H(+). Functionally, catalyzes the last two steps in the biosynthesis of 5-methylaminomethyl-2-thiouridine (mnm(5)s(2)U) at the wobble position (U34) in tRNA. Catalyzes the FAD-dependent demodification of cmnm(5)s(2)U34 to nm(5)s(2)U34, followed by the transfer of a methyl group from S-adenosyl-L-methionine to nm(5)s(2)U34, to form mnm(5)s(2)U34. This chain is tRNA 5-methylaminomethyl-2-thiouridine biosynthesis bifunctional protein MnmC, found in Burkholderia pseudomallei (strain 1710b).